The primary structure comprises 186 residues: MNIGILGIQGDIEEHEEMIKKINHAPKRIRTIEDLKNIDALIIPGGESSTMGKLMKTYGFIEALKNADLPILGTCAGMVLLSKGTGKEQPLLELMDITINRNAYGSQKYSFESELELNGIKINAVFIRAPTVDKILSDEVEIIAKEGGNIVGVKQGKYMAIAFHPELSEEGYKFYEYFLNEVVKND.

46–48 (GES) is a binding site for L-glutamine. Residue Cys75 is the Nucleophile of the active site. L-glutamine is bound by residues Arg101 and 127 to 128 (IR). Active-site charge relay system residues include His164 and Glu166.

It belongs to the glutaminase PdxT/SNO family. As to quaternary structure, in the presence of PdxS, forms a dodecamer of heterodimers. Only shows activity in the heterodimer.

The enzyme catalyses aldehydo-D-ribose 5-phosphate + D-glyceraldehyde 3-phosphate + L-glutamine = pyridoxal 5'-phosphate + L-glutamate + phosphate + 3 H2O + H(+). The catalysed reaction is L-glutamine + H2O = L-glutamate + NH4(+). Its pathway is cofactor biosynthesis; pyridoxal 5'-phosphate biosynthesis. Catalyzes the hydrolysis of glutamine to glutamate and ammonia as part of the biosynthesis of pyridoxal 5'-phosphate. The resulting ammonia molecule is channeled to the active site of PdxS. The polypeptide is Pyridoxal 5'-phosphate synthase subunit PdxT (Methanococcus aeolicus (strain ATCC BAA-1280 / DSM 17508 / OCM 812 / Nankai-3)).